We begin with the raw amino-acid sequence, 245 residues long: tRNA pseudouridine synthase A (245 aa).

The active-site Nucleophile is the Asp-52. Substrate is bound at residue Tyr-111.

This sequence belongs to the tRNA pseudouridine synthase TruA family. Homodimer.

The catalysed reaction is uridine(38/39/40) in tRNA = pseudouridine(38/39/40) in tRNA. Formation of pseudouridine at positions 38, 39 and 40 in the anticodon stem and loop of transfer RNAs. This chain is tRNA pseudouridine synthase A, found in Rickettsia peacockii (strain Rustic).